The sequence spans 81 residues: Cytochrome c oxidase subunit NDUFA4 (81 aa).

At 1–14 (MLRHILGLAKKHPS) the chain is on the mitochondrial matrix side. The residue at position 10 (Lys-10) is an N6-acetyllysine. The helical transmembrane segment at 15 to 37 (LIPLFVFLGTGATGATLYLLRLA) threads the bilayer. The Mitochondrial intermembrane segment spans residues 38-81 (LFSPDVCWDRNNPEPWNKLGPNDQYKFYSVNVDYDKLKKERPDF). Residue Ser-66 is modified to Phosphoserine.

It belongs to the complex IV NDUFA4 subunit family. As to quaternary structure, component of the cytochrome c oxidase (complex IV, CIV), a multisubunit enzyme composed of 14 subunits. The complex is composed of a catalytic core of 3 subunits MT-CO1, MT-CO2 and MT-CO3, encoded in the mitochondrial DNA, and 11 supernumerary subunits COX4I, COX5A, COX5B, COX6A, COX6B, COX6C, COX7A, COX7B, COX7C, COX8 and NDUFA4, which are encoded in the nuclear genome. The complex exists as a monomer or a dimer and forms supercomplexes (SCs) in the inner mitochondrial membrane with NADH-ubiquinone oxidoreductase (complex I, CI) and ubiquinol-cytochrome c oxidoreductase (cytochrome b-c1 complex, complex III, CIII), resulting in different assemblies (supercomplex SCI(1)III(2)IV(1) and megacomplex MCI(2)III(2)IV(2)). Interacts with RAB5IF. Interacts with FLVCR2; this interaction occurs in the absence of heme and is disrupted upon heme binding.

Its subcellular location is the mitochondrion inner membrane. Its function is as follows. Component of the cytochrome c oxidase, the last enzyme in the mitochondrial electron transport chain which drives oxidative phosphorylation. The respiratory chain contains 3 multisubunit complexes succinate dehydrogenase (complex II, CII), ubiquinol-cytochrome c oxidoreductase (cytochrome b-c1 complex, complex III, CIII) and cytochrome c oxidase (complex IV, CIV), that cooperate to transfer electrons derived from NADH and succinate to molecular oxygen, creating an electrochemical gradient over the inner membrane that drives transmembrane transport and the ATP synthase. Cytochrome c oxidase is the component of the respiratory chain that catalyzes the reduction of oxygen to water. Electrons originating from reduced cytochrome c in the intermembrane space (IMS) are transferred via the dinuclear copper A center (CU(A)) of subunit 2 and heme A of subunit 1 to the active site in subunit 1, a binuclear center (BNC) formed by heme A3 and copper B (CU(B)). The BNC reduces molecular oxygen to 2 water molecules unsing 4 electrons from cytochrome c in the IMS and 4 protons from the mitochondrial matrix. NDUFA4 is required for complex IV maintenance. In Macaca fascicularis (Crab-eating macaque), this protein is Cytochrome c oxidase subunit NDUFA4 (NDUFA4).